The primary structure comprises 510 residues: E3 ubiquitin-protein ligase TRIM7 (510 aa).

The RING-type zinc-finger motif lies at 29–81 (CSICLEFFREPVSVECGHSFCRACIMRCWERPGAGTGTATRTLPCPLPCPQCR). Ser106 bears the Phosphoserine; by RPS6KA5 mark. The B box-type zinc-finger motif lies at 124–165 (AAAARCSQHGEQLKLYCQDDGRAICVVCDRAREHRSHAVLPL). Residues Cys129, His132, Cys151, and His157 each contribute to the Zn(2+) site. Residues 165 to 275 (LEEAVQEAKE…SGQIQETAQK (111 aa)) adopt a coiled-coil conformation. The B30.2/SPRY domain maps to 323–510 (LLKKFKEDLQ…STGTYLRIWP (188 aa)).

This sequence belongs to the TRIM/RBCC family. Forms homodimers. Interacts with GNIP2. Interacts with GYG1. Interacts with RNF187 (via C-terminus). Post-translationally, phosphorylated at Ser-106 by RPS6KA5/MSK1, which stimulates the ubiquitin ligase activity. Auto-ubiquitinates via 'Lys-63'-linked polyubiquitination. In terms of tissue distribution, highly expressed in antigen-presenting cells.

The protein resides in the nucleus. Its subcellular location is the cytoplasm. It localises to the golgi apparatus. The enzyme catalyses S-ubiquitinyl-[E2 ubiquitin-conjugating enzyme]-L-cysteine + [acceptor protein]-L-lysine = [E2 ubiquitin-conjugating enzyme]-L-cysteine + N(6)-ubiquitinyl-[acceptor protein]-L-lysine.. It functions in the pathway protein modification; protein ubiquitination. In terms of biological role, E3 ubiquitin-protein ligase that have both tumor-promoting and tumor-suppressing activities and functions in several biological processes including innate immunity, regulation of ferroptosis as well as cell proliferation and migration. Acts as an antiviral effector against multiple viruses by targeting specific viral proteins for ubiquitination and degradation including norovirus NTPase protein. Mechanistically, recognizes the C-terminal glutamine-containing motif generated by viral proteases that process the polyproteins and trigger their ubiquitination and subsequent degradation. Mediates 'Lys-63'-linked polyubiquitination and stabilization of the JUN coactivator RNF187 in response to growth factor signaling via the MEK/ERK pathway, thereby regulating JUN transactivation and cellular proliferation. Promotes the TLR4-mediated signaling activation through its E3 ligase domain leading to production of pro-inflammatory cytokines and type I interferon. Also plays a negative role in the regulation of exogenous cytosolic DNA virus-triggered immune response. Mechanistically, enhances the 'Lys-48'-linked ubiquitination of STING1 leading to its proteasome-dependent degradation. Mediates the ubiquitination of the SIN3-HDAC chromatin remodeling complex component BRMS1. Modulates NCOA4-mediated ferritinophagy and ferroptosis in glioblastoma cells by ubiquitinating NCOA4, leading to its degradation. The chain is E3 ubiquitin-protein ligase TRIM7 (Trim7) from Mus musculus (Mouse).